The chain runs to 106 residues: Met repressor (106 aa).

It belongs to the MetJ family. Homodimer.

The protein resides in the cytoplasm. In terms of biological role, this regulatory protein, when combined with SAM (S-adenosylmethionine) represses the expression of the methionine regulon and of enzymes involved in SAM synthesis. The sequence is that of Met repressor from Vibrio atlanticus (strain LGP32) (Vibrio splendidus (strain Mel32)).